Reading from the N-terminus, the 238-residue chain is RAD9, HUS1, RAD1-interacting nuclear orphan protein 1 (238 aa).

The segment covering 1–10 (MPPRKKRRQP) has biased composition (basic residues). Residues 1-31 (MPPRKKRRQPSQKAPLLFHQQPLEGPKHSCA) form a disordered region. Ser51 bears the Phosphoserine; by PLK1 mark. Residues 55-61 (SWVSPDF) carry the RAD1-binding motif motif. The interval 74-105 (KHQNRARHSSRKPTTSKFPHLTFESPQSSSSE) is disordered. The segment covering 75 to 84 (HQNRARHSSR) has biased composition (basic residues). Positions 125–132 (RRPLVPVL) match the D-box motif. The KEN box motif lies at 174-178 (QKENS).

Interacts (when phosphorylated by PLK1) with POLQ; promoting POLQ recruitment to DNA damage sites. Interacts with RAD1; interaction is direct and promotes association with the 9-1-1 (RAD9-RAD1-HUS1) complex. Interacts with RAD18. Interacts with TOPBP1. Interacts with UBE2N. Post-translationally, phosphorylated at Ser-51 by PLK1, promoting interaction with polymerase theta (POLQ). In terms of processing, ubiquitinated and degraded by the APC/C complex upon mitotic exit. As to expression, weakly expressed in testis, prostate, ovary, thymus and small intestine. Expressed strongly in breast cancer cells.

The protein localises to the nucleus. Its subcellular location is the chromosome. Its function is as follows. Involved in microhomology-mediated end-joining (MMEJ) DNA repair by promoting recruitment of polymerase theta (POLQ) to DNA damage sites during mitosis. MMEJ is an alternative non-homologous end-joining (NHEJ) machinery that takes place during mitosis to repair double-strand breaks in DNA that originate in S-phase. Accumulates in M-phase; following phosphorylation by PLK1, interacts with POLQ, enabling its recruitment to double-strand breaks for subsequent repair. Also involved in the DNA damage response (DDR) signaling in response to genotoxic stresses such as ionizing radiation (IR) during the S phase. Recruited to sites of DNA damage through interaction with the 9-1-1 cell-cycle checkpoint response complex and TOPBP1 in a ATR-dependent manner. Required for the progression of the G1 to S phase transition. Plays a role in the stimulation of CHEK1 phosphorylation. This chain is RAD9, HUS1, RAD1-interacting nuclear orphan protein 1, found in Homo sapiens (Human).